The sequence spans 214 residues: MSLLGFPVEWRVSDGMVDYKAALDFMTSRVDGILEGRESEMVWLLEHPSVYTAGVSAKDGELLSENKFQVVRTTRGGKYSYHGPGQRVVYVMLHLGRRDKRDVRLYVRNLGLWVVGTLAEFGIDSHFDDDNTGVWVQYSRQAKKIAAFGIAIRRWVTYHGFSVNISTDLGCYSGIVPCGIAGSHVTSLQDLGVTVPFEEFDAVLQQKFDTIFLQ.

Residues 36–214 (GRESEMVWLL…QQKFDTIFLQ (179 aa)) enclose the BPL/LPL catalytic domain. Substrate contacts are provided by residues 75 to 82 (RGGKYSYH), 147 to 149 (AFG), and 160 to 162 (GFS). The active-site Acyl-thioester intermediate is the Cys-178.

This sequence belongs to the LipB family.

It is found in the cytoplasm. The catalysed reaction is octanoyl-[ACP] + L-lysyl-[protein] = N(6)-octanoyl-L-lysyl-[protein] + holo-[ACP] + H(+). Its pathway is protein modification; protein lipoylation via endogenous pathway; protein N(6)-(lipoyl)lysine from octanoyl-[acyl-carrier-protein]: step 1/2. Catalyzes the transfer of endogenously produced octanoic acid from octanoyl-acyl-carrier-protein onto the lipoyl domains of lipoate-dependent enzymes. Lipoyl-ACP can also act as a substrate although octanoyl-ACP is likely to be the physiological substrate. The protein is Octanoyltransferase of Anaplasma marginale (strain Florida).